The primary structure comprises 281 residues: MEILHSISDVKKYIKQWKKEGLTIGLVPTMGYLHDGHKSLIERASKENDKVIVSDFVNPIQFGPNEDLDVYPRDLDRDAEVCTKAGASILFNPEPSEMYFDDAVTFVNSSKITDILCGARRPGHFRGVCTVVTKLFNITCPDRAYFGEKDAQQVAVIKRMVRDLNFDIEIVACPIIREEDGLAKSSRNSYLSSEERKAATILSKSLNLAKELLDNGEKNVYNIKKAIIIEIGKEPLAKIDYVEVVDSLSLKSVSKVQQSILVAIAVYIGKIRLIDNFTWNI.

30–37 (MGYLHDGH) is a binding site for ATP. Catalysis depends on histidine 37, which acts as the Proton donor. Glutamine 61 is a binding site for (R)-pantoate. Residue glutamine 61 participates in beta-alanine binding. ATP is bound at residue 147–150 (GEKD). Position 153 (glutamine 153) interacts with (R)-pantoate. ATP contacts are provided by residues isoleucine 176 and 184–187 (KSSR).

The protein belongs to the pantothenate synthetase family. Homodimer.

The protein localises to the cytoplasm. The catalysed reaction is (R)-pantoate + beta-alanine + ATP = (R)-pantothenate + AMP + diphosphate + H(+). It participates in cofactor biosynthesis; (R)-pantothenate biosynthesis; (R)-pantothenate from (R)-pantoate and beta-alanine: step 1/1. Functionally, catalyzes the condensation of pantoate with beta-alanine in an ATP-dependent reaction via a pantoyl-adenylate intermediate. The polypeptide is Pantothenate synthetase (Clostridium acetobutylicum (strain ATCC 824 / DSM 792 / JCM 1419 / IAM 19013 / LMG 5710 / NBRC 13948 / NRRL B-527 / VKM B-1787 / 2291 / W)).